The primary structure comprises 2742 residues: Polycystin-1-like protein 1 (2742 aa).

At 1-1602 (MFCLWIFSLA…LDQFLSVSRD (1602 aa)) the chain is on the extracellular side. 5 N-linked (GlcNAc...) asparagine glycosylation sites follow: Asn35, Asn133, Asn149, Asn220, and Asn267. 2 PKD domains span residues 286-372 (AVRI…VKLN) and 370-454 (KLNR…PCQP). 7 N-linked (GlcNAc...) asparagine glycosylation sites follow: Asn383, Asn397, Asn486, Asn545, Asn693, Asn709, and Asn735. Residues 452–1338 (CQPPPVKNLG…ITFFLPASLI (887 aa)) form the REJ domain. 2 disordered regions span residues 767–829 (SPSR…QSDP) and 846–908 (DLRG…RPSV). Over residues 779-799 (SELTDSPVSSVTVGFSGSESF) the composition is skewed to polar residues. The segment covering 880–893 (SFPSDSDSFSHSSS) has biased composition (low complexity). 7 N-linked (GlcNAc...) asparagine glycosylation sites follow: Asn1080, Asn1101, Asn1201, Asn1318, Asn1437, Asn1490, and Asn1568. The GAIN-B domain occupies 1436–1587 (HNFSITQEHL…KVLQQQIQSS (152 aa)). 2 disulfides stabilise this stretch: Cys1541/Cys1569 and Cys1556/Cys1571. Positions 1541–1587 (CLSWEDQQGSWTQNGCRAQTNDKTSAVNCSCHHLKPLKVLQQQIQSS) are GPS. The chain crosses the membrane as a helical span at residues 1603–1623 (LTVVFVLLLCVSLNIPVLVWC). Residues 1624-1812 (KKTDATSEEN…SPHLFTRAQR (189 aa)) lie on the Cytoplasmic side of the membrane. The region spanning 1648–1769 (HFYAVTVHTG…GDGQVERMLR (122 aa)) is the PLAT domain. A helical transmembrane segment spans residues 1813 to 1833 (LCVCLLLFLGYACVNIIITHQ). Over 1834–1851 (RDDQLPFDLGVIDVTSVS) the chain is Extracellular. The helical transmembrane segment at 1852–1872 (IATGLVSVVAVLPVAMVISFL) threads the bilayer. The Cytoplasmic portion of the chain corresponds to 1873-2005 (FRVKSGRMTL…YRLASLLYHC (133 aa)). Residues 2006–2026 (VAWTLCLLFCLSCLILSAVLG) form a helical membrane-spanning segment. At 2027–2040 (TRLNSGKILHWIHS) the chain is on the extracellular side. Residues 2041–2061 (LFVSLTFCFFVIHPATILVLA) form a helical membrane-spanning segment. The Cytoplasmic portion of the chain corresponds to 2062–2151 (AVVSWRFKRS…KQAVIHKMLR (90 aa)). Residues 2152–2172 (DLCLCGSMFFLMVCITYGSPV) traverse the membrane as a helical segment. Residues 2173–2344 (DEHYPLNAAF…QSVRLYHSPS (172 aa)) lie on the Extracellular side of the membrane. Asn2218 carries an N-linked (GlcNAc...) asparagine glycan. Residues 2345–2365 (MLDYTVMVWQLLFLLLSLVNL) traverse the membrane as a helical segment. Topologically, residues 2366–2378 (YHQTSTAAQHGLM) are cytoplasmic. The chain crosses the membrane as a helical span at residues 2379–2401 (GYWKTTSISVEVSLVIVSLVYYV). Residues 2402–2442 (HYVYHPTMVMEVAEQLRRNHREHVDVSTLANSEQFSRTLRG) lie on the Extracellular side of the membrane. The chain crosses the membrane as a helical span at residues 2443-2463 (IILFLLAVKCVTVVRLNRILA). At 2464-2467 (PSMP) the chain is on the cytoplasmic side. Residues 2468–2488 (LLSLSSLLWPAISGLLLLSIF) traverse the membrane as a helical segment. The Extracellular portion of the chain corresponds to 2489–2528 (SCMGRLLYIERTFHSIQTVLWHFWSLRKSRDLISLWRDFY). Residues 2529 to 2549 (YFGLLYASSAMLTTMVFAVMI) form a helical membrane-spanning segment. Residues 2550-2742 (RKAKRSPSTK…LVHHEQGTKN (193 aa)) lie on the Cytoplasmic side of the membrane.

Belongs to the polycystin family. In terms of assembly, heterodimer. Interacts with pkd2 to form a calcium channel. Interacts with pkd2l1 to form ciliary calcium channel. As to expression, expressed in Kupffer's vesicle, an organ equivalent to the node.

The protein resides in the cell projection. It localises to the cilium membrane. Functionally, component of a calcium-permeant ion channel formed by PKD1L2 and PKD1L1 in primary cilia, where it controls cilium calcium concentration, without affecting cytoplasmic calcium concentration, and regulates sonic hedgehog/SHH signaling and GLI2 transcription. The PKD1L1:PKD2L1 channel complex is mechanosensitive only at high pressures and is highly temperature sensitive. Also involved in left/right axis specification downstream of nodal flow by forming a complex with PKD2 in cilia to facilitate flow detection in left/right patterning. The chain is Polycystin-1-like protein 1 from Oryzias latipes (Japanese rice fish).